A 144-amino-acid chain; its full sequence is Large ribosomal subunit protein uL15 (144 aa).

The interval 1-52 (MRLNSLSPAEGAKHSAKRLGRGIGSGLGKTGGRGHKGQKSRTGGGVRRGFEG) is disordered. Residues 21–31 (RGIGSGLGKTG) show a composition bias toward gly residues.

The protein belongs to the universal ribosomal protein uL15 family. Part of the 50S ribosomal subunit.

Binds to the 23S rRNA. This chain is Large ribosomal subunit protein uL15, found in Actinobacillus pleuropneumoniae serotype 5b (strain L20).